Here is a 1011-residue protein sequence, read N- to C-terminus: MSQASVDMEDVKPSISLPSDDGGAMEARLTDVCKSKLALDESTMRQAMILFRESKHILLANMSAIGSGSPEEIERFWSAFVLYCVTRLSKGRTKQEKEENGITLCRILRVLKMNVVDFFKEIPQFCLKAGYILTGLYGSDWEKRLELKELQANIVHLSLLSRYYKRAYQELFLPNDASSGRHSVAPNSVGYVSDYHHFGWLLFLALRIHAFSRFKDLVTCTNGLVSILAILILHIPARFRNFHIQDSLLFAKRTAKGVDLVASLCDKYHTSEDELRRVMEKANNLIVDILKKKPCAASECKRENLAYINTDGLIYFEDLLEENSLQSSILILEDNYDDAINSKGELDERMFVNDEDSLLGSGSLSGGSIKMKRKYDAMASPAKSITSPLSPPLSPASPVNGNPVIKMVPITPVSTAMTTAKWLRNIISPLPSRPSTELLCFFSSCDRDITTDVTRRASIILGAIFPTTSFGDCCISGNLQSVNQMDSIWAEQRKVEAMKLYYRVLETMCRAESHILNGNNLTSLLSNDRFHRCMLACSAELVLATHKTVTMMFPAVLEKTGITAFDLSKVIESFVRHEETLPRELKRHLNSLEERLLESMAWERGSSMYNSLIVARPTLAAEINRLGLLAEPMPSLDAIAVHNNISTGGLPPLPFQKHEHSSDQNGGAVSPKRACSEYRSVLVERNSFTSPVKELTLTLNLKSKLPPLQSAFASPTRPNPAGGGETCAETGINIFFNKIVKLAAIRIRSLCERLQLPQQILEWVYCLIQQILSQRTALFFNRHIDQIILCSFYGVAKISQMALTFKEIIYNYRKQPQCKPQVFRSVFVHWPSTSHNGKTGQEHVDIITFYNEVFIPSVKPLLVELGPAGVAQKSKSSPEDSNNADSQIPGSPRLSPFPNLPDMSPKKVSAAHNVYVSPLRSSKMDALLSPSSKSYYACVGESTHAYQSPSKDLTAINNRLNSGRKVSGRLNFDVVSDSVVAGSLGAQNGSSAPAPACSILELPVKREQPDS.

The interval 1-22 (MSQASVDMEDVKPSISLPSDDG) is disordered. The segment at 411-612 (TPVSTAMTTA…ERGSSMYNSL (202 aa)) is domain A. Residues 411 to 860 (TPVSTAMTTA…NEVFIPSVKP (450 aa)) are pocket. The segment at 613 to 729 (IVARPTLAAE…PAGGGETCAE (117 aa)) is spacer. The domain B stretch occupies residues 730–860 (TGINIFFNKI…NEVFIPSVKP (131 aa)). The disordered stretch occupies residues 872–903 (QKSKSSPEDSNNADSQIPGSPRLSPFPNLPDM). A compositionally biased stretch (polar residues) spans 873 to 889 (KSKSSPEDSNNADSQIP).

This sequence belongs to the retinoblastoma protein (RB) family.

Its subcellular location is the nucleus. Regulator of biological processes that recruits a histone deacetylase to control gene transcription. May play a role in the entry into mitosis, negatively regulating the cell proliferation. Formation of stable complexes with geminiviridae replication-associated proteins may create a cellular environment which favors viral DNA replication. This is Retinoblastoma-related protein (Rb1) from Cocos nucifera (Coconut palm).